Reading from the N-terminus, the 149-residue chain is Calmodulin (149 aa).

A2 bears the N-acetylalanine mark. 4 consecutive EF-hand domains span residues 8–43, 44–79, 81–116, and 117–149; these read EQVS…LGQN, PSES…KMKD, DSEE…IGEK, and LTDD…MMQK. Ca(2+) contacts are provided by D21, D23, D25, Q27, E32, D57, D59, N61, T63, E68, D94, D96, N98, E105, D130, D132, D134, R136, and E141.

Belongs to the calmodulin family.

Its function is as follows. Calmodulin mediates the control of a large number of enzymes, ion channels and other proteins by Ca(2+). Among the enzymes to be stimulated by the calmodulin-Ca(2+) complex are a number of protein kinases and phosphatases. The sequence is that of Calmodulin (camA) from Emericella nidulans (strain FGSC A4 / ATCC 38163 / CBS 112.46 / NRRL 194 / M139) (Aspergillus nidulans).